Consider the following 459-residue polypeptide: Elongation factor 1-alpha (459 aa).

Glycine 2 is subject to N,N,N-trimethylglycine. N6,N6-dimethyllysine; alternate is present on lysine 3. Lysine 3 bears the N6-methyllysine; alternate mark. A tr-type G domain is found at 5–240; that stretch reads KTHVNVVVIG…DAVDPPTRPS (236 aa). Positions 14–21 are G1; it reads GHVDSGKS. 14-21 contacts GTP; the sequence is GHVDSGKS. Lysine 30 carries the N6-methyllysine modification. Residues 70-74 are G2; it reads VITID. Lysine 79 is subject to N6,N6,N6-trimethyllysine. Positions 91-94 are G3; that stretch reads DAPG. Residues 91 to 95 and 153 to 156 contribute to the GTP site; these read DAPGH and NKMD. The interval 153-156 is G4; that stretch reads NKMD. The tract at residues 192 to 194 is G5; that stretch reads SGW. The residue at position 316 (lysine 316) is an N6,N6-dimethyllysine; alternate. An N6-methyllysine; alternate modification is found at lysine 316. The residue at position 390 (lysine 390) is an N6-methyllysine.

Belongs to the TRAFAC class translation factor GTPase superfamily. Classic translation factor GTPase family. EF-Tu/EF-1A subfamily.

The protein resides in the cytoplasm. This protein promotes the GTP-dependent binding of aminoacyl-tRNA to the A-site of ribosomes during protein biosynthesis. The polypeptide is Elongation factor 1-alpha (TEF) (Blastobotrys adeninivorans (Yeast)).